We begin with the raw amino-acid sequence, 115 residues long: Aspartate 1-decarboxylase (115 aa).

The Schiff-base intermediate with substrate; via pyruvic acid role is filled by S25. Pyruvic acid (Ser) is present on S25. T57 lines the substrate pocket. Y58 functions as the Proton donor in the catalytic mechanism. 71–73 (GAA) provides a ligand contact to substrate.

This sequence belongs to the PanD family. In terms of assembly, heterooctamer of four alpha and four beta subunits. Requires pyruvate as cofactor. Post-translationally, is synthesized initially as an inactive proenzyme, which is activated by self-cleavage at a specific serine bond to produce a beta-subunit with a hydroxyl group at its C-terminus and an alpha-subunit with a pyruvoyl group at its N-terminus.

The protein localises to the cytoplasm. The enzyme catalyses L-aspartate + H(+) = beta-alanine + CO2. The protein operates within cofactor biosynthesis; (R)-pantothenate biosynthesis; beta-alanine from L-aspartate: step 1/1. Its function is as follows. Catalyzes the pyruvoyl-dependent decarboxylation of aspartate to produce beta-alanine. This chain is Aspartate 1-decarboxylase, found in Campylobacter concisus (strain 13826).